The sequence spans 1149 residues: Golgi apparatus protein 1 homolog (1149 aa).

Residues M1 to Q19 form the signal peptide. Over Q20–N1115 the chain is Extracellular. Cys-rich GLG1 repeat units lie at residues N24 to T69, T71 to T135, K139 to A207, I216 to F276, M277 to E344, Q349 to N411, K415 to S475, D477 to Q549, P551 to N610, R613 to E676, M677 to K736, D743 to L803, H809 to L867, L868 to I938, D945 to L1009, and I1010 to E1070. N-linked (GlcNAc...) asparagine glycosylation is present at N133. An N-linked (GlcNAc...) asparagine glycan is attached at N411. The chain crosses the membrane as a helical span at residues S1116 to G1136. The Cytoplasmic segment spans residues R1137–R1149.

It localises to the membrane. The sequence is that of Golgi apparatus protein 1 homolog from Caenorhabditis elegans.